Consider the following 131-residue polypeptide: Transcription antitermination protein NusB (131 aa).

It belongs to the NusB family.

Functionally, involved in transcription antitermination. Required for transcription of ribosomal RNA (rRNA) genes. Binds specifically to the boxA antiterminator sequence of the ribosomal RNA (rrn) operons. In Agathobacter rectalis (strain ATCC 33656 / DSM 3377 / JCM 17463 / KCTC 5835 / VPI 0990) (Eubacterium rectale), this protein is Transcription antitermination protein NusB.